The following is a 223-amino-acid chain: ATP synthase subunit a 2 (223 aa).

The next 5 membrane-spanning stretches (helical) occupy residues Val-17–Cys-37, Phe-77–Leu-97, Lys-106–Val-126, Phe-173–Leu-193, and Ile-195–Ala-215.

It belongs to the ATPase A chain family. In terms of assembly, F-type ATPases have 2 components, CF(1) - the catalytic core - and CF(0) - the membrane proton channel. CF(1) has five subunits: alpha(3), beta(3), gamma(1), delta(1), epsilon(1). CF(0) has four main subunits: a, b, b' and c.

Its subcellular location is the cell inner membrane. Functionally, key component of the proton channel; it plays a direct role in the translocation of protons across the membrane. The protein is ATP synthase subunit a 2 of Bradyrhizobium sp. (strain BTAi1 / ATCC BAA-1182).